Reading from the N-terminus, the 202-residue chain is Translation initiation factor IF-3 (202 aa).

Belongs to the IF-3 family. In terms of assembly, monomer.

The protein localises to the cytoplasm. IF-3 binds to the 30S ribosomal subunit and shifts the equilibrium between 70S ribosomes and their 50S and 30S subunits in favor of the free subunits, thus enhancing the availability of 30S subunits on which protein synthesis initiation begins. This chain is Translation initiation factor IF-3, found in Prochlorococcus marinus (strain NATL2A).